Here is a 97-residue protein sequence, read N- to C-terminus: Putative septation protein SpoVG (97 aa).

Belongs to the SpoVG family.

Could be involved in septation. This is Putative septation protein SpoVG from Borreliella burgdorferi (strain ATCC 35210 / DSM 4680 / CIP 102532 / B31) (Borrelia burgdorferi).